The chain runs to 196 residues: MATALASKLSKGRSLLGGLCNAFSGLMNSSSNGMMNGSILSQQQHRTFIQMGTILKCVDNSCAKEVMCIQSLRGKKGARLGDIIVGSVKEANPIVQKKVKKDAIPKGKVKKGMVVYGVVVRAAMPKGRADGSQVKFDDNAIVVVGIKEKKGQNNSHGSKRKMEYNQPTGTRVFGPVPHEMRLRKQLKILSLAQHIV.

A mitochondrion-targeting transit peptide spans 1 to 62 (MATALASKLS…TILKCVDNSC (62 aa)). The tract at residues 148 to 175 (EKKGQNNSHGSKRKMEYNQPTGTRVFGP) is disordered.

It belongs to the universal ribosomal protein uL14 family. Part of the mitochondrial 50S ribosomal subunit. Mostly expressed in pistils and inflorescences, including floral organs and meristems, and, to a lower extent, in leaves.

The protein localises to the mitochondrion. In terms of biological role, binds to 23S rRNA in mitochondrion. Required for the formation of the proximal region of the ovule primordium during floral organogenesis, thus participating in patterning and growth of ovule. Also regulates the initiation and/or maintenance of integument and embryo sac ontogenesis. Prevents inappropriate cell death in the young ovule. This is Large ribosomal subunit protein uL14my (HLL) from Arabidopsis thaliana (Mouse-ear cress).